The primary structure comprises 380 residues: Alcohol dehydrogenase 2 (380 aa).

Residues cysteine 48, threonine 50, histidine 70, cysteine 100, cysteine 103, cysteine 106, cysteine 114, and cysteine 178 each contribute to the Zn(2+) site. An alcohol is bound by residues threonine 50 and histidine 70. Threonine 50 serves as a coordination point for NAD(+). NAD(+)-binding positions include 203–208 (GLGAVG), aspartate 227, arginine 232, threonine 273, valine 296, 296–298 (VGV), phenylalanine 323, and arginine 373.

It belongs to the zinc-containing alcohol dehydrogenase family. As to quaternary structure, homodimer. Homotetramer. The cofactor is Zn(2+).

The protein resides in the cytoplasm. The catalysed reaction is a primary alcohol + NAD(+) = an aldehyde + NADH + H(+). The enzyme catalyses a secondary alcohol + NAD(+) = a ketone + NADH + H(+). The polypeptide is Alcohol dehydrogenase 2 (ADH2) (Solanum tuberosum (Potato)).